A 112-amino-acid chain; its full sequence is uncharacterized protein (112 aa).

The next 2 helical transmembrane spans lie at 33-53 (IIGI…MIIF) and 69-89 (MNNI…HITV).

It is found in the membrane. This is an uncharacterized protein from Saccharomyces cerevisiae (strain ATCC 204508 / S288c) (Baker's yeast).